The sequence spans 476 residues: Glucose-1-phosphate adenylyltransferase (476 aa).

Alpha-D-glucose 1-phosphate-binding positions include Tyr114, Gly179, 194-195 (EK), and Ser212.

Belongs to the bacterial/plant glucose-1-phosphate adenylyltransferase family. Homotetramer.

It catalyses the reaction alpha-D-glucose 1-phosphate + ATP + H(+) = ADP-alpha-D-glucose + diphosphate. It participates in glycan biosynthesis; glycogen biosynthesis. In terms of biological role, involved in the biosynthesis of ADP-glucose, a building block required for the elongation reactions to produce glycogen. Catalyzes the reaction between ATP and alpha-D-glucose 1-phosphate (G1P) to produce pyrophosphate and ADP-Glc. The sequence is that of Glucose-1-phosphate adenylyltransferase from Yersinia pestis bv. Antiqua (strain Antiqua).